We begin with the raw amino-acid sequence, 432 residues long: Glutamyl-tRNA reductase (432 aa).

Substrate is bound by residues 55–58 (TCNR), Ser114, 119–121 (ETQ), and Gln125. Cys56 (nucleophile) is an active-site residue. 194–199 (GAGEMI) is a binding site for NADP(+).

Belongs to the glutamyl-tRNA reductase family. In terms of assembly, homodimer.

The enzyme catalyses (S)-4-amino-5-oxopentanoate + tRNA(Glu) + NADP(+) = L-glutamyl-tRNA(Glu) + NADPH + H(+). It participates in porphyrin-containing compound metabolism; protoporphyrin-IX biosynthesis; 5-aminolevulinate from L-glutamyl-tRNA(Glu): step 1/2. Functionally, catalyzes the NADPH-dependent reduction of glutamyl-tRNA(Glu) to glutamate 1-semialdehyde (GSA). In Burkholderia lata (strain ATCC 17760 / DSM 23089 / LMG 22485 / NCIMB 9086 / R18194 / 383), this protein is Glutamyl-tRNA reductase.